A 100-amino-acid chain; its full sequence is NADH-quinone oxidoreductase subunit K (100 aa).

A run of 3 helical transmembrane segments spans residues 3 to 23 (PTSY…VGVI), 29 to 49 (LVLF…LVTF), and 60 to 80 (IVVF…LALL).

It belongs to the complex I subunit 4L family. NDH-1 is composed of 14 different subunits. Subunits NuoA, H, J, K, L, M, N constitute the membrane sector of the complex.

The protein resides in the cell membrane. It catalyses the reaction a quinone + NADH + 5 H(+)(in) = a quinol + NAD(+) + 4 H(+)(out). NDH-1 shuttles electrons from NADH, via FMN and iron-sulfur (Fe-S) centers, to quinones in the respiratory chain. The immediate electron acceptor for the enzyme in this species is believed to be ubiquinone. Couples the redox reaction to proton translocation (for every two electrons transferred, four hydrogen ions are translocated across the cytoplasmic membrane), and thus conserves the redox energy in a proton gradient. The chain is NADH-quinone oxidoreductase subunit K from Roseiflexus castenholzii (strain DSM 13941 / HLO8).